Reading from the N-terminus, the 68-residue chain is Small ribosomal subunit protein bS21 (68 aa).

Belongs to the bacterial ribosomal protein bS21 family.

The chain is Small ribosomal subunit protein bS21 from Paracoccus denitrificans (strain Pd 1222).